A 266-amino-acid polypeptide reads, in one-letter code: Putative carbamate hydrolase RutD (266 aa).

The AB hydrolase-1 domain maps to 15 to 128 (AVLLSSGLGG…NAHSARCFDA (114 aa)).

This sequence belongs to the AB hydrolase superfamily. Hydrolase RutD family.

It carries out the reaction carbamate + 2 H(+) = NH4(+) + CO2. In terms of biological role, involved in pyrimidine catabolism. May facilitate the hydrolysis of carbamate, a reaction that can also occur spontaneously. The protein is Putative carbamate hydrolase RutD of Variovorax paradoxus (strain S110).